The chain runs to 282 residues: Acetyl-coenzyme A carboxylase carboxyl transferase subunit beta (282 aa).

The region spanning 29–282 (LPINCPSCSA…LSSLLGLHQG (254 aa)) is the CoA carboxyltransferase N-terminal domain. Residues Cys-33, Cys-36, Cys-52, and Cys-55 each contribute to the Zn(2+) site. A C4-type zinc finger spans residues 33 to 55 (CPSCSARIAAEALQRNLKVCPKC).

This sequence belongs to the AccD/PCCB family. As to quaternary structure, acetyl-CoA carboxylase is a heterohexamer composed of biotin carboxyl carrier protein (AccB), biotin carboxylase (AccC) and two subunits each of ACCase subunit alpha (AccA) and ACCase subunit beta (AccD). Zn(2+) serves as cofactor.

It localises to the cytoplasm. It carries out the reaction N(6)-carboxybiotinyl-L-lysyl-[protein] + acetyl-CoA = N(6)-biotinyl-L-lysyl-[protein] + malonyl-CoA. Its pathway is lipid metabolism; malonyl-CoA biosynthesis; malonyl-CoA from acetyl-CoA: step 1/1. Functionally, component of the acetyl coenzyme A carboxylase (ACC) complex. Biotin carboxylase (BC) catalyzes the carboxylation of biotin on its carrier protein (BCCP) and then the CO(2) group is transferred by the transcarboxylase to acetyl-CoA to form malonyl-CoA. This Syntrophomonas wolfei subsp. wolfei (strain DSM 2245B / Goettingen) protein is Acetyl-coenzyme A carboxylase carboxyl transferase subunit beta.